Consider the following 144-residue polypeptide: Deoxyuridine 5'-triphosphate nucleotidohydrolase (144 aa).

Substrate contacts are provided by residues 63–65, N76, and 80–82; these read RSG and TVD.

The protein belongs to the dUTPase family. Mg(2+) serves as cofactor.

It carries out the reaction dUTP + H2O = dUMP + diphosphate + H(+). It participates in pyrimidine metabolism; dUMP biosynthesis; dUMP from dCTP (dUTP route): step 2/2. This enzyme is involved in nucleotide metabolism: it produces dUMP, the immediate precursor of thymidine nucleotides and it decreases the intracellular concentration of dUTP so that uracil cannot be incorporated into DNA. This Flavobacterium johnsoniae (strain ATCC 17061 / DSM 2064 / JCM 8514 / BCRC 14874 / CCUG 350202 / NBRC 14942 / NCIMB 11054 / UW101) (Cytophaga johnsonae) protein is Deoxyuridine 5'-triphosphate nucleotidohydrolase.